Reading from the N-terminus, the 783-residue chain is DNA polymerase II (783 aa).

It belongs to the DNA polymerase type-B family.

The catalysed reaction is DNA(n) + a 2'-deoxyribonucleoside 5'-triphosphate = DNA(n+1) + diphosphate. DNA polymerase II activity is regulated by the lexA gene during the SOS response. Functionally, thought to be involved in DNA repair and/or mutagenesis. Its processivity is enhanced by the beta sliding clamp (dnaN) and clamp loader. The protein is DNA polymerase II (polB) of Escherichia coli (strain K12).